Reading from the N-terminus, the 105-residue chain is NADH-quinone oxidoreductase subunit K (105 aa).

3 helical membrane-spanning segments follow: residues 8–28, 33–53, and 65–85; these read VTNG…GIII, ILIL…NFLI, and VFVF…LAIV.

It belongs to the complex I subunit 4L family. As to quaternary structure, NDH-1 is composed of 14 different subunits. Subunits NuoA, H, J, K, L, M, N constitute the membrane sector of the complex.

The protein localises to the cell inner membrane. The catalysed reaction is a quinone + NADH + 5 H(+)(in) = a quinol + NAD(+) + 4 H(+)(out). In terms of biological role, NDH-1 shuttles electrons from NADH, via FMN and iron-sulfur (Fe-S) centers, to quinones in the respiratory chain. The immediate electron acceptor for the enzyme in this species is believed to be ubiquinone. Couples the redox reaction to proton translocation (for every two electrons transferred, four hydrogen ions are translocated across the cytoplasmic membrane), and thus conserves the redox energy in a proton gradient. This is NADH-quinone oxidoreductase subunit K from Francisella philomiragia subsp. philomiragia (strain ATCC 25017 / CCUG 19701 / FSC 153 / O#319-036).